A 451-amino-acid chain; its full sequence is uncharacterized protein (451 aa).

The protein to ORF5 in pFZ1.

This is an uncharacterized protein from Methanothermobacter thermautotrophicus (Methanobacterium thermoformicicum).